The following is a 212-amino-acid chain: MYFINPQEKFPPVSFADEDGLLAVTRDLSPDRLMEAYYKGIFPWYNEGQPVLWWSPDPRMVLFPENLKIAKSMRPYLNQDKFQVTFNQEFEKVIEACGNVNREGQDGTWITPEIKENYLKLHQEGIAVSTEVWEGSMLVGGLYGIYLKDKKVFCGESMFSKASNASKFGFIKLVQKLEKEGVKLIDCQIYTSHLESLGAEEIDRIEFLKFLI.

The protein belongs to the L/F-transferase family.

It localises to the cytoplasm. The enzyme catalyses N-terminal L-lysyl-[protein] + L-leucyl-tRNA(Leu) = N-terminal L-leucyl-L-lysyl-[protein] + tRNA(Leu) + H(+). The catalysed reaction is N-terminal L-arginyl-[protein] + L-leucyl-tRNA(Leu) = N-terminal L-leucyl-L-arginyl-[protein] + tRNA(Leu) + H(+). It catalyses the reaction L-phenylalanyl-tRNA(Phe) + an N-terminal L-alpha-aminoacyl-[protein] = an N-terminal L-phenylalanyl-L-alpha-aminoacyl-[protein] + tRNA(Phe). In terms of biological role, functions in the N-end rule pathway of protein degradation where it conjugates Leu, Phe and, less efficiently, Met from aminoacyl-tRNAs to the N-termini of proteins containing an N-terminal arginine or lysine. This is Leucyl/phenylalanyl-tRNA--protein transferase from Christiangramia forsetii (strain DSM 17595 / CGMCC 1.15422 / KT0803) (Gramella forsetii).